The primary structure comprises 302 residues: Methionyl-tRNA formyltransferase (302 aa).

108–111 lines the (6S)-5,6,7,8-tetrahydrofolate pocket; sequence SILP.

Belongs to the Fmt family.

The catalysed reaction is L-methionyl-tRNA(fMet) + (6R)-10-formyltetrahydrofolate = N-formyl-L-methionyl-tRNA(fMet) + (6S)-5,6,7,8-tetrahydrofolate + H(+). In terms of biological role, attaches a formyl group to the free amino group of methionyl-tRNA(fMet). The formyl group appears to play a dual role in the initiator identity of N-formylmethionyl-tRNA by promoting its recognition by IF2 and preventing the misappropriation of this tRNA by the elongation apparatus. This chain is Methionyl-tRNA formyltransferase, found in Sulfurimonas denitrificans (strain ATCC 33889 / DSM 1251) (Thiomicrospira denitrificans (strain ATCC 33889 / DSM 1251)).